The following is a 396-amino-acid chain: S-adenosylmethionine synthase (396 aa).

Residue His15 participates in ATP binding. Asp17 is a binding site for Mg(2+). Position 43 (Glu43) interacts with K(+). 2 residues coordinate L-methionine: Glu56 and Gln99. The flexible loop stretch occupies residues 99–109 (QSADIALGVDR). ATP contacts are provided by residues 175–177 (DGK), 241–242 (RF), Asp250, 256–257 (RK), Ala273, and Lys277. Asp250 provides a ligand contact to L-methionine. Lys281 lines the L-methionine pocket.

The protein belongs to the AdoMet synthase family. Homotetramer; dimer of dimers. It depends on Mg(2+) as a cofactor. K(+) is required as a cofactor.

Its subcellular location is the cytoplasm. It carries out the reaction L-methionine + ATP + H2O = S-adenosyl-L-methionine + phosphate + diphosphate. It participates in amino-acid biosynthesis; S-adenosyl-L-methionine biosynthesis; S-adenosyl-L-methionine from L-methionine: step 1/1. Functionally, catalyzes the formation of S-adenosylmethionine (AdoMet) from methionine and ATP. The overall synthetic reaction is composed of two sequential steps, AdoMet formation and the subsequent tripolyphosphate hydrolysis which occurs prior to release of AdoMet from the enzyme. The sequence is that of S-adenosylmethionine synthase from Desulfitobacterium hafniense (strain DSM 10664 / DCB-2).